A 314-amino-acid polypeptide reads, in one-letter code: Carbamate kinase (314 aa).

This sequence belongs to the carbamate kinase family. In terms of assembly, homodimer.

The enzyme catalyses hydrogencarbonate + NH4(+) + ATP = carbamoyl phosphate + ADP + H2O + H(+). It functions in the pathway metabolic intermediate metabolism; carbamoyl phosphate degradation; CO(2) and NH(3) from carbamoyl phosphate: step 1/1. This Trichomonas vaginalis protein is Carbamate kinase (CBK).